A 348-amino-acid polypeptide reads, in one-letter code: Dihydroorotase (348 aa).

Zn(2+)-binding residues include His17 and His19. Substrate is bound by residues 19-21 (HLR) and Asn45. Residues Lys103, His140, and His178 each contribute to the Zn(2+) site. Lys103 is subject to N6-carboxylysine. A substrate-binding site is contributed by His140. Residue Leu223 participates in substrate binding. A Zn(2+)-binding site is contributed by Asp251. Asp251 is a catalytic residue. His255 and Ala267 together coordinate substrate.

Belongs to the metallo-dependent hydrolases superfamily. DHOase family. Class II DHOase subfamily. As to quaternary structure, homodimer. Zn(2+) serves as cofactor.

The enzyme catalyses (S)-dihydroorotate + H2O = N-carbamoyl-L-aspartate + H(+). Its pathway is pyrimidine metabolism; UMP biosynthesis via de novo pathway; (S)-dihydroorotate from bicarbonate: step 3/3. Catalyzes the reversible cyclization of carbamoyl aspartate to dihydroorotate. The protein is Dihydroorotase of Escherichia coli O7:K1 (strain IAI39 / ExPEC).